The sequence spans 556 residues: Energy-dependent translational throttle protein EttA (556 aa).

2 ABC transporter domains span residues 7–260 (YTMH…EQEQ) and 325–551 (IEVQ…RIKY). ATP is bound at residue 40 to 47 (GLNGAGKS). The interval 96-140 (SEVKNALTRLDEVYALYADPDADFDKLAAEQANLEAIIQAHDGHN) is arm. Residues 243–323 (GNYSSWLEQK…IPPGPRLGDK (81 aa)) form a ptIM region. 357-364 (GANGAGKS) lines the ATP pocket.

The protein belongs to the ABC transporter superfamily. ABCF family. Translational throttle EttA subfamily. In terms of assembly, monomer. Probably contacts ribosomal proteins L1, L5, L33 and S7, the 16S and 23S rRNA and the P-site containing tRNA(fMet).

It localises to the cytoplasm. The enzyme catalyses ATP + H2O = ADP + phosphate + H(+). In terms of biological role, a translation factor that gates the progression of the 70S ribosomal initiation complex (IC, containing tRNA(fMet) in the P-site) into the translation elongation cycle by using a mechanism sensitive to the ATP/ADP ratio. Binds to the 70S ribosome E-site where it modulates the state of the translating ribosome during subunit translocation. ATP hydrolysis probably frees it from the ribosome, which can enter the elongation phase. The sequence is that of Energy-dependent translational throttle protein EttA from Haemophilus influenzae (strain ATCC 51907 / DSM 11121 / KW20 / Rd).